The chain runs to 71 residues: uncharacterized protein (71 aa).

Over residues 1-10 the composition is skewed to basic residues; sequence MHRKKRKKEK. The interval 1–20 is disordered; sequence MHRKKRKKEKKRTEKDNTTN. Residues 21–43 traverse the membrane as a helical segment; that stretch reads LPPLFLFPCSLSLPTLLAPVHYI.

Its subcellular location is the membrane. This is an uncharacterized protein from Saccharomyces cerevisiae (strain ATCC 204508 / S288c) (Baker's yeast).